Here is a 335-residue protein sequence, read N- to C-terminus: Phosphate acyltransferase (335 aa).

It belongs to the PlsX family. In terms of assembly, homodimer. Probably interacts with PlsY.

The protein localises to the cytoplasm. It catalyses the reaction a fatty acyl-[ACP] + phosphate = an acyl phosphate + holo-[ACP]. It participates in lipid metabolism; phospholipid metabolism. Functionally, catalyzes the reversible formation of acyl-phosphate (acyl-PO(4)) from acyl-[acyl-carrier-protein] (acyl-ACP). This enzyme utilizes acyl-ACP as fatty acyl donor, but not acyl-CoA. The sequence is that of Phosphate acyltransferase from Streptococcus suis (strain 98HAH33).